Here is a 79-residue protein sequence, read N- to C-terminus: Small ribosomal subunit protein bS18 (79 aa).

It belongs to the bacterial ribosomal protein bS18 family. In terms of assembly, part of the 30S ribosomal subunit. Forms a tight heterodimer with protein bS6.

Functionally, binds as a heterodimer with protein bS6 to the central domain of the 16S rRNA, where it helps stabilize the platform of the 30S subunit. This chain is Small ribosomal subunit protein bS18, found in Salinispora arenicola (strain CNS-205).